The chain runs to 332 residues: Very-long-chain 3-oxoacyl-CoA reductase (332 aa).

The helical transmembrane segment at 15 to 35 (GQWALAGIGALYVATRVGAFL) threads the bilayer. Residues Val60, Asp115, Asp123, Asn142, Lys177, Tyr209, Lys213, Val242, and Thr244 each coordinate NADP(+). Tyr209 acts as the Proton donor in catalysis. Lys213 serves as the catalytic Lowers pKa of active site Tyr.

The protein belongs to the short-chain dehydrogenases/reductases (SDR) family.

The protein localises to the endoplasmic reticulum membrane. The catalysed reaction is a very-long-chain (3R)-3-hydroxyacyl-CoA + NADP(+) = a very-long-chain 3-oxoacyl-CoA + NADPH + H(+). Its pathway is lipid metabolism; fatty acid biosynthesis. Its function is as follows. Component of the microsomal membrane bound fatty acid elongation system, which produces the 26-carbon very long-chain fatty acids (VLCFA) from palmitate. Catalyzes the reduction of the 3-ketoacyl-CoA intermediate that is formed in each cycle of fatty acid elongation. VLCFAs serve as precursors for ceramide and sphingolipids. In Neurospora crassa (strain ATCC 24698 / 74-OR23-1A / CBS 708.71 / DSM 1257 / FGSC 987), this protein is Very-long-chain 3-oxoacyl-CoA reductase.